Here is a 164-residue protein sequence, read N- to C-terminus: ATP synthase subunit b 2 (164 aa).

The chain crosses the membrane as a helical span at residues 4-24 (TFWAFVGLVLFLALLAYFKVP).

The protein belongs to the ATPase B chain family. In terms of assembly, F-type ATPases have 2 components, F(1) - the catalytic core - and F(0) - the membrane proton channel. F(1) has five subunits: alpha(3), beta(3), gamma(1), delta(1), epsilon(1). F(0) has three main subunits: a(1), b(2) and c(10-14). The alpha and beta chains form an alternating ring which encloses part of the gamma chain. F(1) is attached to F(0) by a central stalk formed by the gamma and epsilon chains, while a peripheral stalk is formed by the delta and b chains.

The protein resides in the cell inner membrane. In terms of biological role, f(1)F(0) ATP synthase produces ATP from ADP in the presence of a proton or sodium gradient. F-type ATPases consist of two structural domains, F(1) containing the extramembraneous catalytic core and F(0) containing the membrane proton channel, linked together by a central stalk and a peripheral stalk. During catalysis, ATP synthesis in the catalytic domain of F(1) is coupled via a rotary mechanism of the central stalk subunits to proton translocation. Component of the F(0) channel, it forms part of the peripheral stalk, linking F(1) to F(0). This is ATP synthase subunit b 2 from Bartonella quintana (strain Toulouse) (Rochalimaea quintana).